Consider the following 309-residue polypeptide: Protein phosphatase 1 regulatory subunit 42 (309 aa).

7 LRR repeats span residues 29–50, 51–72, 73–94, 95–116, 117–138, 147–168, and 169–190; these read KITH…SLCK, NLSV…NYAT, NLTH…RSLK, KLEK…EGLG, ELRE…LFDP, SLCI…ELLE, and NLNQ…EFLL. Positions 204–242 constitute an LRRCT domain; that stretch reads NPVCLKPKYRDRLILVSKSLEFLDGKEIKNIERQFLMNW.

As to quaternary structure, interacts with PPP1CC isoform gamma-2; the interaction is direct. Interacts with actin, dynein, KIF5B, KIFC1 and tubulin. Associates with microtubules. Phosphorylated; in the testis.

The protein resides in the cytoplasm. It localises to the cytoskeleton. The protein localises to the microtubule organizing center. It is found in the centrosome. Regulates phosphatase activity of protein phosphatase 1 (PP1) complexes in the testis. This is Protein phosphatase 1 regulatory subunit 42 from Homo sapiens (Human).